The following is a 461-amino-acid chain: Fumarate hydratase class II (461 aa).

Substrate-binding positions include 97-99 (SGT), 127-130 (HPND), 137-139 (SSN), and threonine 185. The active-site Proton donor/acceptor is histidine 186. Serine 316 is an active-site residue. Residues serine 317 and 322 to 324 (KVN) contribute to the substrate site.

Belongs to the class-II fumarase/aspartase family. Fumarase subfamily. Homotetramer.

Its subcellular location is the cytoplasm. The catalysed reaction is (S)-malate = fumarate + H2O. The protein operates within carbohydrate metabolism; tricarboxylic acid cycle; (S)-malate from fumarate: step 1/1. Functionally, involved in the TCA cycle. Catalyzes the stereospecific interconversion of fumarate to L-malate. The chain is Fumarate hydratase class II from Staphylococcus haemolyticus (strain JCSC1435).